We begin with the raw amino-acid sequence, 154 residues long: Myoglobin (154 aa).

Positions 2 to 148 (GLSDGEWQLV…FRNDIAAKYK (147 aa)) constitute a Globin domain. Ser-4 carries the post-translational modification Phosphoserine. A nitrite-binding site is contributed by His-65. An O2-binding site is contributed by His-65. Phosphothreonine is present on Thr-68. His-94 lines the heme b pocket.

In terms of assembly, monomer.

The protein resides in the cytoplasm. Its subcellular location is the sarcoplasm. It carries out the reaction Fe(III)-heme b-[protein] + nitric oxide + H2O = Fe(II)-heme b-[protein] + nitrite + 2 H(+). It catalyses the reaction H2O2 + AH2 = A + 2 H2O. In terms of biological role, monomeric heme protein which primary function is to store oxygen and facilitate its diffusion within muscle tissues. Reversibly binds oxygen through a pentacoordinated heme iron and enables its timely and efficient release as needed during periods of heightened demand. Depending on the oxidative conditions of tissues and cells, and in addition to its ability to bind oxygen, it also has a nitrite reductase activity whereby it regulates the production of bioactive nitric oxide. Under stress conditions, like hypoxia and anoxia, it also protects cells against reactive oxygen species thanks to its pseudoperoxidase activity. This chain is Myoglobin, found in Hystrix cristata (North African crested porcupine).